Reading from the N-terminus, the 269-residue chain is Surfeit locus protein 4 (269 aa).

5 helical membrane-spanning segments follow: residues 64-84 (LLAS…CVLV), 92-112 (YACF…SILW), 179-199 (FFSI…AIGF), 203-223 (LAAL…NAFW), and 239-259 (FFQT…GPGG). The Di-lysine motif motif lies at 266–269 (KKEW).

This sequence belongs to the SURF4 family. Found in a complex composed at least of SURF4, TMED2 and TMED10. May interact with LMAN1. Interacts with ZFYVE27 and with KIF5A in a ZFYVE27-dependent manner. Interacts with STING1. Interacts with SAR1B. Interacts with TMEM41B.

It is found in the endoplasmic reticulum membrane. The protein resides in the endoplasmic reticulum-Golgi intermediate compartment membrane. The protein localises to the golgi apparatus membrane. Its function is as follows. Endoplasmic reticulum cargo receptor that mediates the export of lipoproteins by recruiting cargos into COPII vesicles to facilitate their secretion. Acts as a cargo receptor for lipoproteins bearing both APOB and APOA1, thereby regulating lipoprotein delivery and the maintenance of lipid homeostasis. Synergizes with the GTPase SAR1B to mediate transport of circulating lipoproteins. Promotes the secretion of PCSK9. Also mediates the efficient secretion of erythropoietin (EPO). May also play a role in the maintenance of the architecture of the endoplasmic reticulum-Golgi intermediate compartment and of the Golgi. This chain is Surfeit locus protein 4, found in Homo sapiens (Human).